Reading from the N-terminus, the 890-residue chain is MAILSNPQFTPSQQAAVDHDGHDILVSASAGSGKTSVLVARVIQKILKGTDVDTLLVVTFTEAAATEMRQRIQAALRDASEKATEPAVKQRLRQQLSLVPTAQISTLHAFCLKVIKQFYYVIDRDPVFRLLSDTAERLLLADQVWQRVREAFYNHEYVKENEQDTLFYELAQNFSNDRNDDGLTDIVFELLDFANANSNPVKWLNKLPKSYAVDEAGLTASDYFQEKILPILQQTITECLEALQEAEQLSKTSENLMIYAPQIATTQAALTQINADAKTLNWQAWRQQLTDAQLGPAKRTKKLEPDEQINKDRLKADLDDVKKKIQTLLDTYFVFDEATTANIQRQAGQLVQKLVSVTLTFREAFQAEKERRHLLDFSDLEQLCLTILSVEDSPARAFYQQKFSEVLVDEYQDTNPLQETIIQKVTSDHPRNLFMVGDVKQSIYAFRLADPSLFKNKYNEFGVTEAERDSERIILAENFRSRRNIDDFTNLIFKQLMDENLGELDYDENAALQYGARYYPDQHPTAPTELLLYETKPEEAVANPQLDKSEGQVVAVAKRIQAMMTNGEQIWDKKLEKMRPIEYRDIVLLAPTRGNNLFILDYFKRFGLPVVIKDAQNYFQTTEVQIMLALLQVIDNPNQDIPLVSVLRSPIVGLNENELALIRINDKTDDYYQAVFNFIDQYNEQKVGHLGQQVMQKLTHFMALLTSFRTIARQQPIVDLIWTIYQETGFLDYVGGMPAGRQRQANLHALYERATAYEENGFKGLFQFIQFIERLQKQDKDLAQPTSLENQDAISVMTIHGSKGLEFPVVFLIDTSRRFNQQDLQRSYVLDNHGGLGVVYLDSQKRLKVPTLPELAITAQKRKKLRAEEMLKTIRCFDTCGTMVNHRWPL.

One can recognise a UvrD-like helicase ATP-binding domain in the interval 7 to 482 (PQFTPSQQAA…IILAENFRSR (476 aa)). 28–35 (ASAGSGKT) is an ATP binding site. Positions 510-804 (AALQYGARYY…SVMTIHGSKG (295 aa)) constitute a UvrD-like helicase C-terminal domain.

It belongs to the helicase family. AddA subfamily. Heterodimer of AddA and AddB/RexB. Mg(2+) serves as cofactor.

The enzyme catalyses Couples ATP hydrolysis with the unwinding of duplex DNA by translocating in the 3'-5' direction.. It catalyses the reaction ATP + H2O = ADP + phosphate + H(+). In terms of biological role, the heterodimer acts both as an ATP-dependent DNA helicase and as an ATP-dependent, dual-direction single-stranded exonuclease. Recognizes the chi site generating a DNA molecule suitable for the initiation of homologous recombination. The AddA nuclease domain is required for chi fragment generation; this subunit has the helicase and 3' -&gt; 5' nuclease activities. The polypeptide is ATP-dependent helicase/nuclease subunit A (addA) (Latilactobacillus sakei subsp. sakei (strain 23K) (Lactobacillus sakei subsp. sakei)).